The sequence spans 210 residues: uncharacterized protein (210 aa).

Phosphoserine occurs at positions 18, 39, 41, 57, and 60. Polar residues predominate over residues 33–46 (LDLDQRSMSPSNIA). The disordered stretch occupies residues 33–58 (LDLDQRSMSPSNIASGEDRITRTNSG). 2 disordered regions span residues 100-139 (YDHNNGTKSPTPKTSNMVDPKNKKKNKKKKNDKDDKYKVS) and 177-210 (DSAPLDNANYPLSDHSPSLNSMDNTTKHSSNVHT). Residues 102 to 116 (HNNGTKSPTPKTSNM) are compositionally biased toward polar residues. The segment covering 130-139 (NDKDDKYKVS) has biased composition (basic and acidic residues). A phosphoserine mark is found at Ser-178, Ser-189, and Ser-192. Over residues 191–210 (HSPSLNSMDNTTKHSSNVHT) the composition is skewed to polar residues.

This is an uncharacterized protein from Saccharomyces cerevisiae (strain ATCC 204508 / S288c) (Baker's yeast).